A 109-amino-acid polypeptide reads, in one-letter code: SVAFSRAVLAEFLATLIFVFFGLGSALSWPQALPSVLQIALAFGLAIGTLVQALGHVSGAHINPAVTVACLVGCHVSFLRAAFYVAAQLLGAVAGAAILHEITPPDVRG.

At Ser-1–Arg-6 the chain is on the cytoplasmic side. A helical transmembrane segment spans residues Ala-7 to Leu-27. Residues Ser-28–Ser-35 are Extracellular-facing. Residues Val-36–Leu-54 form a helical membrane-spanning segment. At Gly-55 to Gly-59 the chain is on the cytoplasmic side. The segment at residues Ala-60 to Ala-69 is an intramembrane region (discontinuously helical). The short motif at Asn-63 to Ala-65 is the NPA 1 element. Residues Cys-70 to Arg-80 are Cytoplasmic-facing. The chain crosses the membrane as a helical span at residues Ala-81–Ile-102. The Extracellular segment spans residues Thr-103–Gly-109.

This sequence belongs to the MIP/aquaporin (TC 1.A.8) family. Homotetramer. Serine phosphorylation is necessary and sufficient for expression at the apical membrane. Endocytosis is not phosphorylation-dependent. Post-translationally, N-glycosylated.

It localises to the apical cell membrane. Its subcellular location is the basolateral cell membrane. It is found in the cell membrane. The protein localises to the cytoplasmic vesicle membrane. The protein resides in the golgi apparatus. It localises to the trans-Golgi network membrane. It carries out the reaction H2O(in) = H2O(out). The catalysed reaction is glycerol(in) = glycerol(out). Forms a water-specific channel that provides the plasma membranes of renal collecting duct with high permeability to water, thereby permitting water to move in the direction of an osmotic gradient. Plays an essential role in renal water homeostasis. Could also be permeable to glycerol. This Dasypus novemcinctus (Nine-banded armadillo) protein is Aquaporin-2.